A 448-amino-acid polypeptide reads, in one-letter code: MGKYFGTDGVRGVANKELTPELAFKIGRFGGYVLTKDTDRPKVIIGRDTRISGHMLEGALVAGLLSTGAEVMRLGVISTPGVAYLTKALDAQAGVMISASHNPVQDNGIKFFGSDGFKLTDEQEAEIEALLDKEVDELPRPTGTNLGQVSDYFEGGQKYLQYIKQTVEEDFSGLHIALDCAHGATSSLAPYLFADLEADISTMGTSPNGMNINDGVGSTHPEVLAELVKEKGADIGLAFDGDGDRLIAVDEKGNIVDGDQIMFICAKYMKETGQLKHNTVVSTVMSNLGFYKALEANGITSDKTAVGDRYVMEEMKRGGYNLGGEQSGHIILLDYITTGDGMLSALQLVNIMKMTKKPLSELAGEMTKFPQLLVNVRVTDKKLALENEKIKEIIRVVEEEMNGDGRILVRPSGTEPLIRVMAEAPTQEVCDAYVHRIVEVVKAEVGAE.

Serine 100 functions as the Phosphoserine intermediate in the catalytic mechanism. Mg(2+) is bound by residues serine 100, aspartate 240, aspartate 242, and aspartate 244. Position 100 is a phosphoserine (serine 100).

The protein belongs to the phosphohexose mutase family. Requires Mg(2+) as cofactor. Activated by phosphorylation.

The enzyme catalyses alpha-D-glucosamine 1-phosphate = D-glucosamine 6-phosphate. Functionally, catalyzes the conversion of glucosamine-6-phosphate to glucosamine-1-phosphate. The protein is Phosphoglucosamine mutase of Bacillus anthracis (strain A0248).